The chain runs to 362 residues: Protein indeterminate-domain 16 (362 aa).

Residues 1 to 22 are disordered; that stretch reads MELTQPIRENGDPQGHQLTDPD. C2H2-type zinc fingers lie at residues 39-61 and 82-112; these read YVCE…RRRH and YVCP…RRKH. Residues 118-142 form a CCHC-type 1; atypical zinc finger; it reads WVCERCSKGYAVQSDYKAHLKTCGS. Positions 120, 123, 136, 140, 147, 149, 162, and 166 each coordinate Zn(2+). Residues 145-168 form a CCHC-type 2; atypical zinc finger; the sequence is HSCDCGRVFSRVESFIEHQDTCTI. The SHR-binding stretch occupies residues 155–167; the sequence is RVESFIEHQDTCT. The tract at residues 247-278 is disordered; sequence SAQARHNEKRETSLTKERANEEARKAEETRQE. A compositionally biased stretch (basic and acidic residues) spans 251–278; that stretch reads RHNEKRETSLTKERANEEARKAEETRQE. The stretch at 252–319 forms a coiled coil; it reads HNEKRETSLT…VREEAIKRIN (68 aa).

Highly expressed in leaves, hypocotyls, roots, vasculature of cotyledons, floral organs and in the endodermis and vasculaturenof inflorescence stems.

It localises to the nucleus. In terms of biological role, transcription factor regulating lateral organ morphogenesis and gravitropic responses. Has a redundant role with IDD14 in directing leaf and floral organ morphogenesis. Acts cooperatively with IDD15 to control silique and branche orientation. Involved in the establishment of auxin gradients through the regulation of auxin biosynthesis and transport. The protein is Protein indeterminate-domain 16 of Arabidopsis thaliana (Mouse-ear cress).